The following is a 463-amino-acid chain: ATP synthase subunit beta (463 aa).

152 to 159 (GGAGVGKT) contacts ATP.

Belongs to the ATPase alpha/beta chains family. In terms of assembly, F-type ATPases have 2 components, CF(1) - the catalytic core - and CF(0) - the membrane proton channel. CF(1) has five subunits: alpha(3), beta(3), gamma(1), delta(1), epsilon(1). CF(0) has three main subunits: a(1), b(2) and c(9-12). The alpha and beta chains form an alternating ring which encloses part of the gamma chain. CF(1) is attached to CF(0) by a central stalk formed by the gamma and epsilon chains, while a peripheral stalk is formed by the delta and b chains.

It localises to the cell inner membrane. The enzyme catalyses ATP + H2O + 4 H(+)(in) = ADP + phosphate + 5 H(+)(out). Its function is as follows. Produces ATP from ADP in the presence of a proton gradient across the membrane. The catalytic sites are hosted primarily by the beta subunits. In Shewanella denitrificans (strain OS217 / ATCC BAA-1090 / DSM 15013), this protein is ATP synthase subunit beta.